The sequence spans 368 residues: 1-deoxy-D-xylulose 5-phosphate reductoisomerase (368 aa).

NADPH contacts are provided by T7, G8, S9, I10, G31, K32, N33, and N113. K114 is a 1-deoxy-D-xylulose 5-phosphate binding site. NADPH is bound at residue E115. Residue D133 participates in Mn(2+) binding. 1-deoxy-D-xylulose 5-phosphate-binding residues include S134, E135, S158, and H181. Residue E135 participates in Mn(2+) binding. An NADPH-binding site is contributed by G187. 1-deoxy-D-xylulose 5-phosphate is bound by residues S194, N199, K200, and E203. Position 203 (E203) interacts with Mn(2+).

Belongs to the DXR family. Mg(2+) serves as cofactor. It depends on Mn(2+) as a cofactor.

The enzyme catalyses 2-C-methyl-D-erythritol 4-phosphate + NADP(+) = 1-deoxy-D-xylulose 5-phosphate + NADPH + H(+). Its pathway is isoprenoid biosynthesis; isopentenyl diphosphate biosynthesis via DXP pathway; isopentenyl diphosphate from 1-deoxy-D-xylulose 5-phosphate: step 1/6. In terms of biological role, catalyzes the NADPH-dependent rearrangement and reduction of 1-deoxy-D-xylulose-5-phosphate (DXP) to 2-C-methyl-D-erythritol 4-phosphate (MEP). The chain is 1-deoxy-D-xylulose 5-phosphate reductoisomerase from Helicobacter pylori (strain ATCC 700392 / 26695) (Campylobacter pylori).